The chain runs to 326 residues: Vitamin B12 import system permease protein BtuC (326 aa).

9 helical membrane-spanning segments follow: residues 17 to 39, 59 to 81, 88 to 107, 111 to 133, 146 to 168, 188 to 205, 242 to 264, 274 to 296, and 303 to 322; these read LSLSLLVLLATLLSLCAGEQWIA, RTLAVLLVGAALALSGAVMQALF, PGLLGVSNGAGVGLIAAVLL, QLAGWALGLCAIAGALIITLILL, LLAGVALGIICSALMTWAIYFST, WQQSWLMIALIPVLIWIC, MVGVSVAMAGAIGFIGLVIPHIL, VLLPGCALAGAIALLLADVVARL, and LPIGVVTATLGAPVFIWLLL.

The protein belongs to the binding-protein-dependent transport system permease family. FecCD subfamily. As to quaternary structure, the complex is composed of two ATP-binding proteins (BtuD), two transmembrane proteins (BtuC) and a solute-binding protein (BtuF).

The protein localises to the cell inner membrane. Functionally, part of the ABC transporter complex BtuCDF involved in vitamin B12 import. Involved in the translocation of the substrate across the membrane. The protein is Vitamin B12 import system permease protein BtuC of Salmonella paratyphi A (strain ATCC 9150 / SARB42).